The following is a 71-amino-acid chain: Mitotic-spindle organizing protein 1 (71 aa).

It belongs to the MOZART1 family. As to quaternary structure, part of the gamma-tubulin complex.

The protein localises to the cytoplasm. It is found in the cytoskeleton. Its subcellular location is the microtubule organizing center. It localises to the spindle pole body. Functionally, required for gamma-tubulin complex recruitment to the microtubule organizing center (MTOC). The chain is Mitotic-spindle organizing protein 1 from Aspergillus clavatus (strain ATCC 1007 / CBS 513.65 / DSM 816 / NCTC 3887 / NRRL 1 / QM 1276 / 107).